Reading from the N-terminus, the 238-residue chain is Orotidine 5'-phosphate decarboxylase (238 aa).

Residues aspartate 10, lysine 32, 59–68, threonine 122, arginine 184, glutamine 193, glycine 213, and arginine 214 each bind substrate; that span reads DLKLHDIPNT. Lysine 61 serves as the catalytic Proton donor.

This sequence belongs to the OMP decarboxylase family. Type 1 subfamily. Homodimer.

The enzyme catalyses orotidine 5'-phosphate + H(+) = UMP + CO2. The protein operates within pyrimidine metabolism; UMP biosynthesis via de novo pathway; UMP from orotate: step 2/2. Catalyzes the decarboxylation of orotidine 5'-monophosphate (OMP) to uridine 5'-monophosphate (UMP). The protein is Orotidine 5'-phosphate decarboxylase of Bacillus cereus (strain G9842).